The following is a 473-amino-acid chain: Mediator of RNA polymerase II transcription subunit 29 (473 aa).

Polar residues predominate over residues 1-12; that stretch reads MSGQGPPSNLTP. Disordered stretches follow at residues 1 to 319 and 444 to 473; these read MSGQ…NEEQ and STME…EMAE. The segment covering 13 to 50 has biased composition (low complexity); the sequence is QQQHMIMQQQQQQQMMRQQQIQQQQLHQRQLQQQQAQQ. Polar residues predominate over residues 51 to 62; that stretch reads SYQRSRTPQMQQ. Composition is skewed to low complexity over residues 111–123 and 130–139; these read QMMQ…NQPM and VSRPGSVAPP. 2 stretches are compositionally biased toward polar residues: residues 148–183 and 255–269; these read TGPS…QQSH and PPGS…QPGS. 2 stretches are compositionally biased toward low complexity: residues 272–286 and 294–308; these read APGS…QPPA and AASG…AAPA.

It belongs to the Mediator complex subunit 29 family. Component of the Mediator complex.

The protein localises to the nucleus. Its function is as follows. Component of the Mediator complex, a coactivator involved in the regulated transcription of nearly all RNA polymerase II-dependent genes. Mediator functions as a bridge to convey information from gene-specific regulatory proteins to the basal RNA polymerase II transcription machinery. Mediator is recruited to promoters by direct interactions with regulatory proteins and serves as a scaffold for the assembly of a functional preinitiation complex with RNA polymerase II and the general transcription factors. In Caenorhabditis briggsae, this protein is Mediator of RNA polymerase II transcription subunit 29 (mdt-29).